A 122-amino-acid polypeptide reads, in one-letter code: Prefoldin subunit 1 (122 aa).

Position 2 is an N-acetylalanine (Ala2).

This sequence belongs to the prefoldin subunit beta family. Heterohexamer of two PFD-alpha type and four PFD-beta type subunits.

In terms of biological role, binds specifically to cytosolic chaperonin (c-CPN) and transfers target proteins to it. Binds to nascent polypeptide chain and promotes folding in an environment in which there are many competing pathways for nonnative proteins. The protein is Prefoldin subunit 1 (PFDN1) of Bos taurus (Bovine).